The chain runs to 249 residues: Pyridoxine 5'-phosphate synthase (249 aa).

Residue Asn7 participates in 3-amino-2-oxopropyl phosphate binding. 9 to 10 contributes to the 1-deoxy-D-xylulose 5-phosphate binding site; the sequence is DH. Position 18 (Arg18) interacts with 3-amino-2-oxopropyl phosphate. Residue His43 is the Proton acceptor of the active site. Arg45 and His50 together coordinate 1-deoxy-D-xylulose 5-phosphate. Catalysis depends on Glu70, which acts as the Proton acceptor. Residue Thr100 coordinates 1-deoxy-D-xylulose 5-phosphate. The Proton donor role is filled by His190. 3-amino-2-oxopropyl phosphate contacts are provided by residues Gly191 and 212–213; that span reads GH.

The protein belongs to the PNP synthase family. Homooctamer; tetramer of dimers.

It localises to the cytoplasm. It catalyses the reaction 3-amino-2-oxopropyl phosphate + 1-deoxy-D-xylulose 5-phosphate = pyridoxine 5'-phosphate + phosphate + 2 H2O + H(+). It participates in cofactor biosynthesis; pyridoxine 5'-phosphate biosynthesis; pyridoxine 5'-phosphate from D-erythrose 4-phosphate: step 5/5. Its function is as follows. Catalyzes the complicated ring closure reaction between the two acyclic compounds 1-deoxy-D-xylulose-5-phosphate (DXP) and 3-amino-2-oxopropyl phosphate (1-amino-acetone-3-phosphate or AAP) to form pyridoxine 5'-phosphate (PNP) and inorganic phosphate. The chain is Pyridoxine 5'-phosphate synthase from Synechococcus sp. (strain CC9605).